The following is a 172-amino-acid chain: Glutamyl-tRNA(Gln) amidotransferase subunit C-3, mitochondrial (172 aa).

Residues 49-71 (KHPSKVPQRPNKSTIDGQSTPTR) are disordered. Positions 58–71 (PNKSTIDGQSTPTR) are enriched in polar residues.

The protein belongs to the GatC family. As to quaternary structure, subunit of the heterotrimeric GatCAB amidotransferase (AdT) complex, composed of A, B and C subunits.

It localises to the mitochondrion. It catalyses the reaction L-glutamyl-tRNA(Gln) + L-glutamine + ATP + H2O = L-glutaminyl-tRNA(Gln) + L-glutamate + ADP + phosphate + H(+). In terms of biological role, allows the formation of correctly charged Gln-tRNA(Gln) through the transamidation of misacylated Glu-tRNA(Gln) in the mitochondria. The reaction takes place in the presence of glutamine and ATP through an activated gamma-phospho-Glu-tRNA(Gln). The polypeptide is Glutamyl-tRNA(Gln) amidotransferase subunit C-3, mitochondrial (Culex quinquefasciatus (Southern house mosquito)).